A 431-amino-acid chain; its full sequence is Tyrosine--tRNA ligase (431 aa).

Y34 lines the L-tyrosine pocket. A 'HIGH' region motif is present at residues P39 to H48. L-tyrosine contacts are provided by Y171 and Q175. Residues K231–T235 carry the 'KMSKS' region motif. K234 contributes to the ATP binding site. The 70-residue stretch at I353–K422 folds into the S4 RNA-binding domain.

The protein belongs to the class-I aminoacyl-tRNA synthetase family. TyrS type 1 subfamily. In terms of assembly, homodimer.

The protein resides in the cytoplasm. The enzyme catalyses tRNA(Tyr) + L-tyrosine + ATP = L-tyrosyl-tRNA(Tyr) + AMP + diphosphate + H(+). Functionally, catalyzes the attachment of tyrosine to tRNA(Tyr) in a two-step reaction: tyrosine is first activated by ATP to form Tyr-AMP and then transferred to the acceptor end of tRNA(Tyr). In Neisseria meningitidis serogroup A / serotype 4A (strain DSM 15465 / Z2491), this protein is Tyrosine--tRNA ligase.